The primary structure comprises 663 residues: DNA ligase (663 aa).

Residues 33-37 (DYSYD), 82-83 (SI), and glutamate 112 contribute to the NAD(+) site. Lysine 114 acts as the N6-AMP-lysine intermediate in catalysis. NAD(+) contacts are provided by arginine 135, glutamate 171, lysine 285, and lysine 309. Zn(2+)-binding residues include cysteine 403, cysteine 406, cysteine 419, and cysteine 424. The BRCT domain occupies 581–663 (DKEAPLQGKV…LRILDAKSVS (83 aa)).

Belongs to the NAD-dependent DNA ligase family. LigA subfamily. Requires Mg(2+) as cofactor. Mn(2+) is required as a cofactor.

It catalyses the reaction NAD(+) + (deoxyribonucleotide)n-3'-hydroxyl + 5'-phospho-(deoxyribonucleotide)m = (deoxyribonucleotide)n+m + AMP + beta-nicotinamide D-nucleotide.. Its function is as follows. DNA ligase that catalyzes the formation of phosphodiester linkages between 5'-phosphoryl and 3'-hydroxyl groups in double-stranded DNA using NAD as a coenzyme and as the energy source for the reaction. It is essential for DNA replication and repair of damaged DNA. In Chlamydia trachomatis serovar A (strain ATCC VR-571B / DSM 19440 / HAR-13), this protein is DNA ligase.